Here is a 323-residue protein sequence, read N- to C-terminus: tRNA U34 carboxymethyltransferase (323 aa).

Carboxy-S-adenosyl-L-methionine is bound by residues lysine 91, tryptophan 105, lysine 110, glycine 130, 181–182 (IE), methionine 196, tyrosine 200, and arginine 315.

Belongs to the class I-like SAM-binding methyltransferase superfamily. CmoB family. As to quaternary structure, homotetramer.

The catalysed reaction is carboxy-S-adenosyl-L-methionine + 5-hydroxyuridine(34) in tRNA = 5-carboxymethoxyuridine(34) in tRNA + S-adenosyl-L-homocysteine + H(+). Its function is as follows. Catalyzes carboxymethyl transfer from carboxy-S-adenosyl-L-methionine (Cx-SAM) to 5-hydroxyuridine (ho5U) to form 5-carboxymethoxyuridine (cmo5U) at position 34 in tRNAs. The chain is tRNA U34 carboxymethyltransferase from Yersinia pseudotuberculosis serotype O:3 (strain YPIII).